We begin with the raw amino-acid sequence, 189 residues long: 3-hydroxyanthranilate 3,4-dioxygenase (189 aa).

R49 lines the O2 pocket. The Fe cation site is built by H53, E59, and H97. E59 contacts substrate. R101 and E112 together coordinate substrate. 4 residues coordinate Fe cation: C127, C130, C165, and C168.

Belongs to the 3-HAO family. Homodimer. Fe(2+) is required as a cofactor.

The catalysed reaction is 3-hydroxyanthranilate + O2 = (2Z,4Z)-2-amino-3-carboxymuconate 6-semialdehyde. It functions in the pathway cofactor biosynthesis; NAD(+) biosynthesis; quinolinate from L-kynurenine: step 3/3. Catalyzes the oxidative ring opening of 3-hydroxyanthranilate to 2-amino-3-carboxymuconate semialdehyde, which spontaneously cyclizes to quinolinate. This chain is 3-hydroxyanthranilate 3,4-dioxygenase, found in Cupriavidus pinatubonensis (strain JMP 134 / LMG 1197) (Cupriavidus necator (strain JMP 134)).